Reading from the N-terminus, the 789-residue chain is LPS-assembly protein LptD (789 aa).

The signal sequence occupies residues M1–A39.

The protein belongs to the LptD family. As to quaternary structure, component of the lipopolysaccharide transport and assembly complex. Interacts with LptE and LptA.

Its subcellular location is the cell outer membrane. In terms of biological role, together with LptE, is involved in the assembly of lipopolysaccharide (LPS) at the surface of the outer membrane. The protein is LPS-assembly protein LptD of Paraburkholderia xenovorans (strain LB400).